A 249-amino-acid polypeptide reads, in one-letter code: ATP synthase subunit a, chloroplastic (249 aa).

The next 5 helical transmembrane spans lie at 40 to 60 (QVLITSWVVIAILLGSAVLAI), 97 to 117 (VPFIGTLFLFIFVSNWSGALL), 136 to 156 (INTTVALALLTSVAYFYAGLS), 201 to 221 (LVVVVLVSLVPLVVPIPVMFL), and 222 to 242 (GLFTSGIQALIFATLAAAYIG).

This sequence belongs to the ATPase A chain family. As to quaternary structure, F-type ATPases have 2 components, CF(1) - the catalytic core - and CF(0) - the membrane proton channel. CF(1) has five subunits: alpha(3), beta(3), gamma(1), delta(1), epsilon(1). CF(0) has four main subunits: a, b, b' and c.

The protein resides in the plastid. It localises to the chloroplast thylakoid membrane. In terms of biological role, key component of the proton channel; it plays a direct role in the translocation of protons across the membrane. The protein is ATP synthase subunit a, chloroplastic of Nasturtium officinale (Watercress).